Here is a 605-residue protein sequence, read N- to C-terminus: Conglutin beta 7 (605 aa).

Residues methionine 1–glycine 30 form the signal peptide. Over residues asparagine 37–glutamate 105 the composition is skewed to basic and acidic residues. Disordered stretches follow at residues asparagine 37–threonine 193, leucine 346–aspartate 367, and leucine 382–serine 405. Positions glutamine 140 to glutamine 149 are enriched in low complexity. Basic and acidic residues predominate over residues serine 150–arginine 179. One can recognise a Cupin type-1 1 domain in the interval tyrosine 184–glutamine 342. One can recognise a Cupin type-1 2 domain in the interval phenylalanine 401 to glutamate 563. 2 N-linked (GlcNAc...) asparagine glycosylation sites follow: asparagine 406 and asparagine 513. Residues phenylalanine 574 to arginine 593 form a disordered region.

It belongs to the 7S seed storage protein family. Component of globulins complexes which accumulate in seeds.

Its function is as follows. Seed storage protein. Accumulates during seed development and is hydrolyzed after germination to provide a carbon and nitrogen source for the developing seedling. In Lupinus angustifolius (Narrow-leaved blue lupine), this protein is Conglutin beta 7.